Reading from the N-terminus, the 635-residue chain is Threonine--tRNA ligase (635 aa).

A TGS domain is found at 1-61 (MIKITLKDGK…HKDSSLEILT (61 aa)). The tract at residues 242 to 532 (DHRKLGKELD…LIEQYAGAFP (291 aa)) is catalytic. Zn(2+)-binding residues include C333, H384, and H509.

The protein belongs to the class-II aminoacyl-tRNA synthetase family. In terms of assembly, homodimer. Zn(2+) is required as a cofactor.

Its subcellular location is the cytoplasm. The catalysed reaction is tRNA(Thr) + L-threonine + ATP = L-threonyl-tRNA(Thr) + AMP + diphosphate + H(+). Catalyzes the attachment of threonine to tRNA(Thr) in a two-step reaction: L-threonine is first activated by ATP to form Thr-AMP and then transferred to the acceptor end of tRNA(Thr). Also edits incorrectly charged L-seryl-tRNA(Thr). This chain is Threonine--tRNA ligase, found in Clostridium botulinum (strain Loch Maree / Type A3).